We begin with the raw amino-acid sequence, 554 residues long: Formate--tetrahydrofolate ligase (554 aa).

65 to 72 (TPAGEGKT) serves as a coordination point for ATP.

The protein belongs to the formate--tetrahydrofolate ligase family.

The catalysed reaction is (6S)-5,6,7,8-tetrahydrofolate + formate + ATP = (6R)-10-formyltetrahydrofolate + ADP + phosphate. Its pathway is one-carbon metabolism; tetrahydrofolate interconversion. The polypeptide is Formate--tetrahydrofolate ligase (Petrotoga mobilis (strain DSM 10674 / SJ95)).